The chain runs to 359 residues: Dihydroorotate dehydrogenase (quinone) (359 aa).

Residues 65–69 and Thr89 contribute to the FMN site; that span reads AGLDK. Lys69 contributes to the substrate binding site. 114 to 118 serves as a coordination point for substrate; that stretch reads NRLGF. FMN-binding residues include Asn149 and Asn182. Residue Asn182 coordinates substrate. The active-site Nucleophile is Ser185. Asn187 is a binding site for substrate. FMN is bound by residues Lys233 and Thr261. 262–263 serves as a coordination point for substrate; that stretch reads NT. Residues Gly284, Gly313, and 334-335 each bind FMN; that span reads YT.

It belongs to the dihydroorotate dehydrogenase family. Type 2 subfamily. As to quaternary structure, monomer. The cofactor is FMN.

It localises to the cell membrane. It catalyses the reaction (S)-dihydroorotate + a quinone = orotate + a quinol. It participates in pyrimidine metabolism; UMP biosynthesis via de novo pathway; orotate from (S)-dihydroorotate (quinone route): step 1/1. In terms of biological role, catalyzes the conversion of dihydroorotate to orotate with quinone as electron acceptor. This chain is Dihydroorotate dehydrogenase (quinone), found in Paracidovorax citrulli (strain AAC00-1) (Acidovorax citrulli).